A 266-amino-acid chain; its full sequence is Chymotrypsin-like elastase family member 1 (266 aa).

Residues 1–16 (MLRFLVFASLVLCGHS) form the signal peptide. Positions 17-26 (TEDVPETDAR) are cleaved as a propeptide — activation peptide. The region spanning 27–264 (VVGGAEARRN…YISWMNNVIA (238 aa)) is the Peptidase S1 domain. Cysteines 56 and 72 form a disulfide. The active-site Charge relay system is His71. Residues Glu85, Asn87, Gln90, and Glu95 each coordinate Ca(2+). Asn87 is a glycosylation site (N-linked (GlcNAc...) asparagine). The Charge relay system role is filled by Asp119. Disulfide bonds link Cys153–Cys220, Cys184–Cys200, and Cys210–Cys240. Ser214 (charge relay system) is an active-site residue.

Belongs to the peptidase S1 family. Elastase subfamily. The cofactor is Ca(2+).

The protein localises to the secreted. It catalyses the reaction Hydrolysis of proteins, including elastin. Preferential cleavage: Ala-|-Xaa.. Functionally, serine proteases that hydrolyze many proteins in addition to elastin. This Mus musculus (Mouse) protein is Chymotrypsin-like elastase family member 1 (Cela1).